The primary structure comprises 931 residues: Protocadherin gamma-A1 (931 aa).

Positions 1 to 28 (MKIQKKLTGCSRLMLLCLSLELLLEAGA) are cleaved as a signal peptide. Cadherin domains are found at residues 29–133 (GNIH…TPQF), 134–242 (QLEE…PPAF), 243–347 (TQAQ…APEV), 348–452 (TITS…SPVF), 453–562 (HQDS…APEI), and 570–682 (DGST…EPSA). At 29 to 692 (GNIHYSVPEE…KPNDSDLTLY (664 aa)) the chain is on the extracellular side. N-linked (GlcNAc...) asparagine glycans are attached at residues asparagine 265, asparagine 419, and asparagine 545. A glycan (N-linked (GlcNAc...) asparagine) is linked at asparagine 685. The helical transmembrane segment at 693 to 713 (LVVAAAAVSCVFLAFVIVLLA) threads the bilayer. At 714-931 (HRLRRWHKSR…KKKSGKKEKK (218 aa)) the chain is on the cytoplasmic side. Disordered regions lie at residues 801–840 (KKEPFSQQAPPNTDWRFSQAQRPGTSGSQNGDDTGTWPNN) and 901–931 (ATLTNAAGKRDGKAPAGGNGNKKKSGKKEKK). A compositionally biased stretch (polar residues) spans 805–840 (FSQQAPPNTDWRFSQAQRPGTSGSQNGDDTGTWPNN). The segment covering 921-931 (NKKKSGKKEKK) has biased composition (basic residues).

Its subcellular location is the cell membrane. Its function is as follows. Potential calcium-dependent cell-adhesion protein. May be involved in the establishment and maintenance of specific neuronal connections in the brain. This Homo sapiens (Human) protein is Protocadherin gamma-A1 (PCDHGA1).